The following is a 230-amino-acid chain: Modulator of macroautophagy TMEM150B (230 aa).

Residue Met1 is a topological domain, cytoplasmic. The helical transmembrane segment at 2–22 (WAWALLPICLTIWATAGIWIV) threads the bilayer. The Extracellular segment spans residues 23–50 (YGMSVSNGSVNLTDGFPFISLCGTYPPQ). Residues Asn29 and Asn33 are each glycosylated (N-linked (GlcNAc...) asparagine). Residues 51–71 (SCVFGQVLNVGAMLGVWISVI) traverse the membrane as a helical segment. The Cytoplasmic segment spans residues 72 to 83 (RFQQIRDYGCHS). A helical transmembrane segment spans residues 84 to 104 (VLNSVSLAMGLLCALGTSIVG). At 105–115 (NFQQSNQLETH) the chain is on the extracellular side. The helical transmembrane segment at 116–136 (LAGAFLAFVIGNIYFWMQTVL) threads the bilayer. Residues 137–150 (TYMVKPKHGGCYIG) are Cytoplasmic-facing. The chain crosses the membrane as a helical span at residues 151–171 (PIRFCLSVACTALIVLMAVFL). The Extracellular portion of the chain corresponds to 172–183 (KLNMKSISAICE). Residues 184–204 (WIVAMILFLLYGLFSVDFWHL) traverse the membrane as a helical segment. The Cytoplasmic segment spans residues 205 to 230 (DGHYFHVKKRTAIPNEVEVSTVTLNI).

This sequence belongs to the DRAM/TMEM150 family.

Its subcellular location is the cell membrane. The protein resides in the endosome membrane. It is found in the cytoplasmic vesicle. It localises to the autophagosome membrane. In terms of biological role, modulator of macroautophagy that causes accumulation of autophagosomes under basal conditions and enhances autophagic flux. Represses cell death and promotes long-term clonogenic survival of cells grown in the absence of glucose in a macroautophagy-independent manner. May have some role in extracellular matrix engulfment or growth factor receptor recycling, both of which can modulate cell survival. The chain is Modulator of macroautophagy TMEM150B from Xenopus tropicalis (Western clawed frog).